The chain runs to 49 residues: uncharacterized protein (49 aa).

A helical transmembrane segment spans residues 8–28 (FFLFSSGVLQATTLLLVILIF).

It localises to the cell membrane. This is an uncharacterized protein from Bacillus subtilis (strain 168).